Consider the following 361-residue polypeptide: Ankyrin repeat domain-containing protein 16 (361 aa).

9 ANK repeats span residues 36–66 (AGDT…DIEA), 70–99 (DYKR…AVDC), 103–132 (ADWT…NPLL), 136–165 (DGWN…GAWK), 170–200 (IRRT…EPDY), 204–234 (CGVT…CLSA), 238–268 (LGAQ…DVDV), 273–302 (THLT…DINS), and 306–335 (KNRS…KDSE).

As to quaternary structure, interacts with AARS; the interaction is direct.

The protein localises to the cytoplasm. It localises to the nucleus. Functionally, required to prevent the misactivation of serine (Ser) with tRNA(Ala) by promoting the hydrolysis of Ser-mischarged tRNA(Ala), thereby playing a role in translational fidelity. Binds directly to the catalytic domain of AARS/AlaRS and captures Ser that is misactivated by AARS/AlaRS, preventing the charging of Ser adenylates to tRNA(Ala) and precluding Ser misincorporation in nascent peptides. The polypeptide is Ankyrin repeat domain-containing protein 16 (Homo sapiens (Human)).